A 307-amino-acid polypeptide reads, in one-letter code: Dioxygenase cdmD (307 aa).

The Fe cation site is built by His-146, Asp-148, and His-226.

Belongs to the PhyH family. In terms of assembly, homodimer. Requires Fe cation as cofactor.

The enzyme catalyses verruculide A + 2-oxoglutarate + O2 = chrodrimanin T + succinate + CO2. It carries out the reaction chrodrimanin E + 2-oxoglutarate + O2 = chrodrimanin A + succinate + CO2. It functions in the pathway secondary metabolite biosynthesis; terpenoid biosynthesis. In terms of biological role, dioxygenase; part of the gene cluster that mediates the biosynthesis of chrodrimanin B, a meroterpenoid that acts as a potent blocker of insect GABA-gated chloride channels. The first step of the pathway is the biosynthesis of 6-hydroxymellein by the polyketide synthase cdmE. The prenyltransferase cdmH acts as a 6-hydroxymellein 5-farnesyltransferase and produces the hydrophobic metabolite verruculide C. The FAD-dependent monooxygenase cdmI further converts verruculide C into verruculide B. The terpene cyclase cdmG then produced the pentacyclic molecule 3-hydroxypentacecilide A, the backbone structure of chrodrimanin B, via folding the farnesyl moiety of the substrate into the chair-boat conformation. The short-chain dehydrogenase/reductase cdmF functions as the 3-OH dehydrogenase that oxidizes the C-3 hydroxyl group of 3-hydroxypentacecilide A and produces chrodrimanin C, the dehydrogenated product of 3-hydroxypentacecilide A. The cytochrome P450 monooxygenase cdmJ then accepts both 3-hydroxypentacecilide A and chrodrimanin C and functions as a C-7-beta-hydroxylase to produce respectively chrodrimanin H and chrodrimanin F. The dioxygenase cdmA accepts chrodrimanin H to afford chrodrimanin E, which is further transformed to chrodrimanin A by the dioxygenase cdmD. CdmA can also accept chrodrimanin C as substrate to convert it into verruculide A, which is further converted into chrodrimanin T by cdmD. The last step of the biosynthesis is proposed to be performed by the acetyltransferase cdmC which acetylates chrodrimanin A to yield chrodrimanin B. The pathway may also lead to the production of additional shunt products, including chrodrimanins T and U. This is Dioxygenase cdmD from Talaromyces verruculosus (Penicillium verruculosum).